The chain runs to 444 residues: Glucarate dehydratase (444 aa).

Substrate-binding residues include H30, T101, Y148, and K203. The active-site Proton acceptor is the K205. Residues D233, E264, and N287 each coordinate Mg(2+). Position 233 to 235 (233 to 235 (DPN)) interacts with substrate. Residues N287, 337-339 (HSN), H366, and R420 each bind substrate. The active-site Proton acceptor is the H337.

It belongs to the mandelate racemase/muconate lactonizing enzyme family. GlucD subfamily. Mg(2+) serves as cofactor.

The catalysed reaction is D-glucarate = 5-dehydro-4-deoxy-D-glucarate + H2O. It participates in carbohydrate acid metabolism; D-glucarate degradation; 2,5-dioxopentanoate from D-glucarate: step 1/2. Functionally, catalyzes the dehydration of glucarate to 5-keto-4-deoxy-D-glucarate (5-kdGluc). The sequence is that of Glucarate dehydratase (gudD) from Acinetobacter baylyi (strain ATCC 33305 / BD413 / ADP1).